A 383-amino-acid chain; its full sequence is Guanine nucleotide-binding protein G(s) subunit alpha (383 aa).

Residues 1–31 (MGCFGSAGSKQSDSNSSEDTKSQKRRSDAIT) form a disordered region. Gly-2 carries the N-palmitoyl glycine lipid modification. Residue Cys-3 is the site of S-palmitoyl cysteine attachment. The segment covering 8 to 17 (GSKQSDSNSS) has biased composition (polar residues). The span at 18 to 31 (EDTKSQKRRSDAIT) shows a compositional bias: basic and acidic residues. Positions 43 to 383 (ATHRLLLLGA…RMHLRQYELL (341 aa)) constitute a G-alpha domain. The segment at 46–59 (RLLLLGAGESGKST) is G1 motif. GTP is bound by residues 51–58 (GAGESGKS), 187–193 (LRCRVLT), 212–216 (DVGGQ), 281–284 (NKQD), and Ala-355. Mg(2+)-binding residues include Ser-58 and Thr-193. Residues 185-193 (DILRCRVLT) are G2 motif. Residues 208-217 (FHMFDVGGQR) form a G3 motif region. Residues 277-284 (ILFLNKQD) form a G4 motif region. Residues 353–358 (TCAVDT) are G5 motif.

Belongs to the G-alpha family. G(s) subfamily. G proteins are composed of 3 units; alpha, beta and gamma. The alpha chain contains the guanine nucleotide binding site.

Functionally, guanine nucleotide-binding proteins (G proteins) are involved as modulators or transducers in various transmembrane signaling systems. The G(s) protein is involved in hormonal regulation of adenylate cyclase: it activates the cyclase. Participates in olfactory signal transduction. In Anopheles gambiae (African malaria mosquito), this protein is Guanine nucleotide-binding protein G(s) subunit alpha.